The chain runs to 704 residues: Elongation factor G (704 aa).

A tr-type G domain is found at N10–L290. Residues A19–T26, D83–H87, and N137–D140 each bind GTP.

Belongs to the TRAFAC class translation factor GTPase superfamily. Classic translation factor GTPase family. EF-G/EF-2 subfamily.

It is found in the cytoplasm. Its function is as follows. Catalyzes the GTP-dependent ribosomal translocation step during translation elongation. During this step, the ribosome changes from the pre-translocational (PRE) to the post-translocational (POST) state as the newly formed A-site-bound peptidyl-tRNA and P-site-bound deacylated tRNA move to the P and E sites, respectively. Catalyzes the coordinated movement of the two tRNA molecules, the mRNA and conformational changes in the ribosome. In Clavibacter michiganensis subsp. michiganensis (strain NCPPB 382), this protein is Elongation factor G.